We begin with the raw amino-acid sequence, 866 residues long: Fibrinogen alpha chain (866 aa).

Positions 1 to 19 are cleaved as a signal peptide; it reads MFSMRIVCLVLSVVGTAWT. Ser22 is modified (phosphoserine). The segment at 36-38 is alpha-chain polymerization, binding distal domain of another fibrin gamma chain; that stretch reads GPR. Residue Ser45 is modified to Phosphoserine; by FAM20C. Ser50 is modified (phosphoserine). Residue Ser56 is modified to Phosphoserine; by FAM20C. Residues 68-631 are a coiled coil; sequence CRMKGLIDEV…GHAKSRPVRD (564 aa). The interval 262–460 is disordered; it reads ERPGGNEITR…SGSTTTTRRS (199 aa). The span at 270–299 shows a compositional bias: low complexity; sequence TRGGSTSYGTGSETESPRNPSSAGSWNSGS. Residues Ser281, Ser291, and Ser294 each carry the phosphoserine modification. Thr320 is a glycosylation site (O-linked (GalNAc...) threonine). Lys322 participates in a covalent cross-link: Isoglutamyl lysine isopeptide (Lys-Gln) (interchain with Q-41 in alpha-2-antiplasmin). Gln347 participates in a covalent cross-link: Isoglutamyl lysine isopeptide (Gln-Lys) (interchain with K-?). The O-linked (GalNAc...) serine glycan is linked to Ser351. A compositionally biased stretch (polar residues) spans 354–391; that stretch reads PGSTGTWNPGSSERGSAGHWTSESSVSGSTGQWHSESG. Ser364 carries the post-translational modification Phosphoserine; by FAM20C. Gln385 participates in a covalent cross-link: Isoglutamyl lysine isopeptide (Gln-Lys) (interchain with K-?). A Phosphothreonine modification is found at Thr412. Residues 424–449 show a composition bias toward basic and acidic residues; it reads TRREYHTEKLVTSKGDKELRTGKEKV. The span at 450–460 shows a compositional bias: low complexity; sequence TSGSTTTTRRS. Ser451 is subject to Phosphoserine. A glycan (N-linked (GlcNAc...) asparagine; in variant Caracas-2) is linked at Ser453. The cysteines at positions 461 and 491 are disulfide-linked. A Phosphoserine modification is found at Ser501. The residue at position 505 (Thr505) is a Phosphothreonine. The residue at position 524 (Ser524) is a Phosphoserine; by FAM20C. Residues Lys527 and Lys558 each participate in an isoglutamyl lysine isopeptide (Lys-Gln) (interchain with Q-?) cross-link. Residues 543-638 are disordered; that stretch reads ETESRGSESG…VRDCDDVLQT (96 aa). The residue at position 560 (Ser560) is a Phosphoserine; by FAM20C. Pro565 carries the post-translational modification 4-hydroxyproline; by P4HA1. Isoglutamyl lysine isopeptide (Lys-Gln) (interchain with Q-?) cross-links involve residues Lys575, Lys581, and Lys599. The segment covering 575–589 has biased composition (low complexity); sequence KSSSYSKQFTSSTSY. The segment covering 594 to 617 has biased composition (basic and acidic residues); that stretch reads STFESKSYKMADEAGSEADHEGTH. A Phosphoserine; by FAM20C modification is found at Ser609. The span at 618–627 shows a compositional bias: basic residues; the sequence is STKRGHAKSR. The Fibrinogen C-terminal domain maps to 623–864; the sequence is HAKSRPVRDC…AVRMKIRPLV (242 aa). The N-linked (GlcNAc...) asparagine glycan is linked to Asn686. Asp791, Asp793, Trp795, and Glu797 together coordinate Ca(2+). A disulfide bridge links Cys799 with Cys812.

As to quaternary structure, heterohexamer; disulfide linked. Contains 2 sets of 3 non-identical chains (alpha, beta and gamma). The 2 heterotrimers are in head to head conformation with the N-termini in a small central domain. (Microbial infection) Interacts with Staphylococcus aureus protein Fib; this interaction inhibits fibrinogen-dependent platelet aggregation and protects the bacteria form phagocytosis. Post-translationally, the alpha chain is normally not N-glycosylated, even though glycosylation at Asn-686 was observed when a fragment of the protein was expressed in insect cells. It is well known that heterologous expression of isolated domains can lead to adventitious protein modifications. Besides, glycosylation at Asn-686 is supported by large-scale glycoproteomics studies, but the evidence is still quite tenuous. Most likely, Asn-686 is not glycosylated in the healthy human body, or only with low efficiency. In terms of processing, O-glycosylated. Forms F13A-mediated cross-links between a glutamine and the epsilon-amino group of a lysine residue, forming fibronectin-fibrinogen heteropolymers. Post-translationally, about one-third of the alpha chains in the molecules in blood were found to be phosphorylated. In terms of processing, conversion of fibrinogen to fibrin is triggered by thrombin, which cleaves fibrinopeptides A and B from alpha and beta chains, and thus exposes the N-terminal polymerization sites responsible for the formation of the soft clot. The soft clot is converted into the hard clot by factor XIIIA which catalyzes the epsilon-(gamma-glutamyl)lysine cross-linking between gamma chains (stronger) and between alpha chains (weaker) of different monomers. Phosphorylated by FAM20C in the extracellular medium. As to expression, detected in blood plasma (at protein level).

It is found in the secreted. Cleaved by the protease thrombin to yield monomers which, together with fibrinogen beta (FGB) and fibrinogen gamma (FGG), polymerize to form an insoluble fibrin matrix. Fibrin has a major function in hemostasis as one of the primary components of blood clots. In addition, functions during the early stages of wound repair to stabilize the lesion and guide cell migration during re-epithelialization. Was originally thought to be essential for platelet aggregation, based on in vitro studies using anticoagulated blood. However, subsequent studies have shown that it is not absolutely required for thrombus formation in vivo. Enhances expression of SELP in activated platelets via an ITGB3-dependent pathway. Maternal fibrinogen is essential for successful pregnancy. Fibrin deposition is also associated with infection, where it protects against IFNG-mediated hemorrhage. May also facilitate the immune response via both innate and T-cell mediated pathways. The sequence is that of Fibrinogen alpha chain (FGA) from Homo sapiens (Human).